We begin with the raw amino-acid sequence, 649 residues long: 1-deoxy-D-xylulose-5-phosphate synthase (649 aa).

Thiamine diphosphate contacts are provided by residues His-84 and 125 to 127 (GHS). Asp-156 contributes to the Mg(2+) binding site. Thiamine diphosphate-binding positions include 157–158 (GS), Asn-185, Phe-292, and Glu-385. Asn-185 is a binding site for Mg(2+).

Belongs to the transketolase family. DXPS subfamily. As to quaternary structure, homodimer. The cofactor is Mg(2+). Thiamine diphosphate serves as cofactor.

The catalysed reaction is D-glyceraldehyde 3-phosphate + pyruvate + H(+) = 1-deoxy-D-xylulose 5-phosphate + CO2. It functions in the pathway metabolic intermediate biosynthesis; 1-deoxy-D-xylulose 5-phosphate biosynthesis; 1-deoxy-D-xylulose 5-phosphate from D-glyceraldehyde 3-phosphate and pyruvate: step 1/1. In terms of biological role, catalyzes the acyloin condensation reaction between C atoms 2 and 3 of pyruvate and glyceraldehyde 3-phosphate to yield 1-deoxy-D-xylulose-5-phosphate (DXP). The chain is 1-deoxy-D-xylulose-5-phosphate synthase from Saccharophagus degradans (strain 2-40 / ATCC 43961 / DSM 17024).